The chain runs to 103 residues: uncharacterized protein (103 aa).

Disordered regions lie at residues 1-20 (MIELSYAPDVAGRRSNWPKG) and 44-71 (LERMASDTHGGGGGRPVTPPPPGMHHLG). The signal sequence occupies residues 1-34 (MIELSYAPDVAGRRSNWPKGSGVNTWTAIRWTFA).

This is an uncharacterized protein from Mycobacterium tuberculosis (strain CDC 1551 / Oshkosh).